A 337-amino-acid polypeptide reads, in one-letter code: Cholinesterase 2 (337 aa).

Catalysis depends on S99, which acts as the Acyl-ester intermediate. The cysteines at positions 153 and 165 are disulfide-linked. E224 (charge relay system) is an active-site residue. N-linked (GlcNAc...) asparagine glycosylation occurs at N290.

It belongs to the type-B carboxylesterase/lipase family.

The enzyme catalyses an acylcholine + H2O = a carboxylate + choline + H(+). The polypeptide is Cholinesterase 2 (CHE2) (Branchiostoma lanceolatum (Common lancelet)).